The following is a 108-amino-acid chain: MAVWLQAGALLVLLVVSSVSTNPGTPQHLCGSHLVDALYLVCGPTGFFYNPKRDVEPLLGFLPPKSAQETEVADFAFKDHAELIRKRGIVEQCCHKPCSIFELQNYCN.

Residues 1–21 form the signal peptide; sequence MAVWLQAGALLVLLVVSSVST. 3 cysteine pairs are disulfide-bonded: Cys30/Cys94, Cys42/Cys107, and Cys93/Cys98. Residues 54 to 84 constitute a propeptide, c peptide; it reads DVEPLLGFLPPKSAQETEVADFAFKDHAELI.

This sequence belongs to the insulin family. In terms of assembly, heterodimer of a B chain and an A chain linked by two disulfide bonds.

It localises to the secreted. Its function is as follows. Insulin decreases blood glucose concentration. It increases cell permeability to monosaccharides, amino acids and fatty acids. It accelerates glycolysis, the pentose phosphate cycle, and glycogen synthesis in liver. In Danio rerio (Zebrafish), this protein is Insulin (ins).